The following is a 172-amino-acid chain: Endoribonuclease YbeY (172 aa).

A disordered region spans residues 1-21; the sequence is MTLHVGAEPAPREDDTEDALR. Residues 10–21 show a composition bias toward basic and acidic residues; the sequence is APREDDTEDALR. Residues His134, His138, and His144 each contribute to the Zn(2+) site.

The protein belongs to the endoribonuclease YbeY family. Zn(2+) is required as a cofactor.

The protein localises to the cytoplasm. Functionally, single strand-specific metallo-endoribonuclease involved in late-stage 70S ribosome quality control and in maturation of the 3' terminus of the 16S rRNA. The protein is Endoribonuclease YbeY of Burkholderia lata (strain ATCC 17760 / DSM 23089 / LMG 22485 / NCIMB 9086 / R18194 / 383).